The sequence spans 203 residues: ATP-dependent Clp protease proteolytic subunit (203 aa).

The Nucleophile role is filled by Ser107. The active site involves His132.

It belongs to the peptidase S14 family. In terms of assembly, fourteen ClpP subunits assemble into 2 heptameric rings which stack back to back to give a disk-like structure with a central cavity, resembling the structure of eukaryotic proteasomes.

The protein resides in the cytoplasm. The enzyme catalyses Hydrolysis of proteins to small peptides in the presence of ATP and magnesium. alpha-casein is the usual test substrate. In the absence of ATP, only oligopeptides shorter than five residues are hydrolyzed (such as succinyl-Leu-Tyr-|-NHMec, and Leu-Tyr-Leu-|-Tyr-Trp, in which cleavage of the -Tyr-|-Leu- and -Tyr-|-Trp bonds also occurs).. In terms of biological role, cleaves peptides in various proteins in a process that requires ATP hydrolysis. Has a chymotrypsin-like activity. Plays a major role in the degradation of misfolded proteins. The sequence is that of ATP-dependent Clp protease proteolytic subunit from Shewanella woodyi (strain ATCC 51908 / MS32).